Consider the following 352-residue polypeptide: Phosphate acyltransferase (352 aa).

Residues 328-339 (ESFPGDAREREG) are compositionally biased toward basic and acidic residues. The disordered stretch occupies residues 328–352 (ESFPGDAREREGAPAPDAGTERVAS).

The protein belongs to the PlsX family. In terms of assembly, homodimer. Probably interacts with PlsY.

It is found in the cytoplasm. The enzyme catalyses a fatty acyl-[ACP] + phosphate = an acyl phosphate + holo-[ACP]. Its pathway is lipid metabolism; phospholipid metabolism. Functionally, catalyzes the reversible formation of acyl-phosphate (acyl-PO(4)) from acyl-[acyl-carrier-protein] (acyl-ACP). This enzyme utilizes acyl-ACP as fatty acyl donor, but not acyl-CoA. The chain is Phosphate acyltransferase from Citrifermentans bemidjiense (strain ATCC BAA-1014 / DSM 16622 / JCM 12645 / Bem) (Geobacter bemidjiensis).